A 415-amino-acid chain; its full sequence is Fructose-like permease IIC component (415 aa).

Over 1 to 46 the chain is Cytoplasmic; it reads MAIKKRSATVVPGASGAAAAVKNLQASKSSFWGELPQHVMSGISRM. Residues 35–415 enclose the PTS EIIC type-2 domain; sequence LPQHVMSGIS…RKGKLLIDSL (381 aa). A helical transmembrane segment spans residues 47 to 67; the sequence is VPTLIMGGVILAFSQLIAYSW. Over 68-101 the chain is Periplasmic; sequence LKIPAEIGIMDALNSGKFSGFDLSLLKFAWLSQS. A helical transmembrane segment spans residues 102 to 122; the sequence is FGGVLFGFAIPMFAAFVANSI. Residues 123 to 126 lie on the Cytoplasmic side of the membrane; the sequence is GGKL. Residues 127–147 traverse the membrane as a helical segment; sequence AFPAGFIGGLMSTQPTQLLNF. The Periplasmic segment spans residues 148–157; it reads DPSTMQWATS. The chain crosses the membrane as a helical span at residues 158–178; the sequence is SPVPSTFIGALIISIVAGYLV. Topologically, residues 179–197 are cytoplasmic; the sequence is KWMNQKIQLPDFLLAFKTT. A helical transmembrane segment spans residues 198–218; the sequence is FLLPILSAIFVMLAMYYVITP. At 219–237 the chain is on the periplasmic side; it reads FGGWINGGIRTVLTAAGEK. Residues 238 to 258 traverse the membrane as a helical segment; sequence GALMYAMGIAAATAIDLGGPI. The Cytoplasmic segment spans residues 259–276; sequence NKAAGFVAFSFTTDHVLP. A helical membrane pass occupies residues 277–297; the sequence is VTARSIAIVIPPIGLGLATII. Residues 298–318 are Periplasmic-facing; the sequence is DRRLTGKRLFNAQLYPQGKTA. Residues 319–339 form a helical membrane-spanning segment; that stretch reads MFLAFMGISEGAIPFALESPI. Topologically, residues 340–341 are cytoplasmic; it reads TA. Residues 342 to 362 form a helical membrane-spanning segment; that stretch reads IPSYMVGAIVGSTAAVWLGAV. The Periplasmic portion of the chain corresponds to 363–378; the sequence is QWFPESAIWAWPLVTN. A helical transmembrane segment spans residues 379 to 399; sequence LGVYMAGIALGAIITALMVVF. Residues 400-415 are Cytoplasmic-facing; the sequence is LRLMMFRKGKLLIDSL.

Its subcellular location is the cell inner membrane. Functionally, the phosphoenolpyruvate-dependent sugar phosphotransferase system (PTS), a major carbohydrate active -transport system, catalyzes the phosphorylation of incoming sugar substrates concomitant with their translocation across the cell membrane. This Shigella flexneri protein is Fructose-like permease IIC component (fryC).